The primary structure comprises 761 residues: Spindle assembly abnormal protein 4 (761 aa).

Positions 1–11 (MLPSENGDEDQ) are enriched in acidic residues. The tract at residues 1–109 (MLPSENGDED…SNERREEDNV (109 aa)) is disordered. The segment covering 51 to 62 (TPTNSAPSSART) has biased composition (polar residues). A compositionally biased stretch (basic and acidic residues) spans 90 to 106 (ESHDSGNRSESNERREE). Residues 129–156 (ETCSKVSEEATQLRAEADRITAQANFIN) are a coiled coil. Residues 164–173 (TPSSYSSNIS) show a composition bias toward low complexity. Disordered stretches follow at residues 164–228 (TPSS…QARP) and 252–280 (PRRQ…SEHV). The segment covering 210 to 223 (QTLSSLASSGSLDT) has biased composition (polar residues). Residues 265 to 280 (SQKENVPERKAPSEHV) are compositionally biased toward basic and acidic residues. Residues 326 to 464 (RKKQEEAYAK…EKDDREKEMF (139 aa)) are a coiled coil. Low complexity predominate over residues 479-497 (ATGSAASSRLPSVSSLASS). A disordered region spans residues 479–510 (ATGSAASSRLPSVSSLASSMKTGSTGKGRTVS).

It localises to the cytoplasm. Its subcellular location is the cytoskeleton. The protein resides in the microtubule organizing center. It is found in the centrosome. Functionally, required for centrosome duplication. Plays a central role in determining centrosome size. The sequence is that of Spindle assembly abnormal protein 4 (sas-4) from Caenorhabditis briggsae.